The chain runs to 179 residues: Large ribosomal subunit protein uL5 (179 aa).

This sequence belongs to the universal ribosomal protein uL5 family. In terms of assembly, part of the 50S ribosomal subunit; part of the 5S rRNA/L5/L18/L25 subcomplex. Contacts the 5S rRNA and the P site tRNA. Forms a bridge to the 30S subunit in the 70S ribosome.

This is one of the proteins that bind and probably mediate the attachment of the 5S RNA into the large ribosomal subunit, where it forms part of the central protuberance. In the 70S ribosome it contacts protein S13 of the 30S subunit (bridge B1b), connecting the 2 subunits; this bridge is implicated in subunit movement. Contacts the P site tRNA; the 5S rRNA and some of its associated proteins might help stabilize positioning of ribosome-bound tRNAs. The chain is Large ribosomal subunit protein uL5 from Shewanella putrefaciens (strain CN-32 / ATCC BAA-453).